Reading from the N-terminus, the 312-residue chain is MALGNCTTPTTFILSGLTDNPRLQMPLFMVFLAIYTITLLANLGLIALISVDFHLQTPMYIFLQNLSFTDAAYSTVITPKMLATFLEERRTISYVGCILQYFSFVLLTSSECLLLAVMAYDRYVAICKPLLYPAIMTKAVCWRLVEGLYSLAFLNSLVHTSGLLKLSFCSSNVVNHFFCDNSPLFQISSSSTTLNELLVFIFGSWFAMSSIITTPISYVFIILTVVRIRSKDGKYKAFSTCTSHLMAVSLFHGTVIFMYLRPVKLFSLDTDKIASLFYTVVIPMLNPLIYSWRNKEVKDALRRVIATNVWIH.

The Extracellular portion of the chain corresponds to 1–26; sequence MALGNCTTPTTFILSGLTDNPRLQMP. N-linked (GlcNAc...) asparagine glycosylation is present at asparagine 5. The helical transmembrane segment at 27–49 threads the bilayer; sequence LFMVFLAIYTITLLANLGLIALI. Residues 50 to 57 lie on the Cytoplasmic side of the membrane; sequence SVDFHLQT. Residues 58–79 form a helical membrane-spanning segment; it reads PMYIFLQNLSFTDAAYSTVITP. The Extracellular portion of the chain corresponds to 80-100; the sequence is KMLATFLEERRTISYVGCILQ. Residues cysteine 97 and cysteine 179 are joined by a disulfide bond. A helical membrane pass occupies residues 101 to 120; sequence YFSFVLLTSSECLLLAVMAY. Residues 121–139 are Cytoplasmic-facing; that stretch reads DRYVAICKPLLYPAIMTKA. A helical membrane pass occupies residues 140 to 164; the sequence is VCWRLVEGLYSLAFLNSLVHTSGLL. Residues 165 to 205 are Extracellular-facing; sequence KLSFCSSNVVNHFFCDNSPLFQISSSSTTLNELLVFIFGSW. A helical membrane pass occupies residues 206–226; sequence FAMSSIITTPISYVFIILTVV. Topologically, residues 227–239 are cytoplasmic; that stretch reads RIRSKDGKYKAFS. A helical transmembrane segment spans residues 240–260; that stretch reads TCTSHLMAVSLFHGTVIFMYL. Topologically, residues 261-271 are extracellular; sequence RPVKLFSLDTD. The helical transmembrane segment at 272–292 threads the bilayer; the sequence is KIASLFYTVVIPMLNPLIYSW. Over 293-312 the chain is Cytoplasmic; the sequence is RNKEVKDALRRVIATNVWIH.

This sequence belongs to the G-protein coupled receptor 1 family.

It localises to the cell membrane. Its function is as follows. Odorant receptor. The protein is Olfactory receptor-like protein COR5 (COR5) of Gallus gallus (Chicken).